The chain runs to 298 residues: Tyrosine recombinase XerD (298 aa).

In terms of domain architecture, Core-binding (CB) spans 2-87 (KQDLARIEQF…AVRRLFQYLY (86 aa)). Positions 108–292 (RLPKDLSEAQ…ATERLRQLHQ (185 aa)) constitute a Tyr recombinase domain. Residues arginine 148, lysine 172, histidine 244, arginine 247, and histidine 270 contribute to the active site. The active-site O-(3'-phospho-DNA)-tyrosine intermediate is tyrosine 279.

The protein belongs to the 'phage' integrase family. XerD subfamily. As to quaternary structure, forms a cyclic heterotetrameric complex composed of two molecules of XerC and two molecules of XerD, in which XerC interacts with XerD via its C-terminal region, XerD interacts with XerC via its C-terminal region and so on.

The protein localises to the cytoplasm. Its activity is regulated as follows. FtsK may regulate the catalytic switch between XerC and XerD in the heterotetrameric complex during the two steps of the recombination process. Functionally, site-specific tyrosine recombinase, which acts by catalyzing the cutting and rejoining of the recombining DNA molecules. Binds cooperatively to specific DNA consensus sequences that are separated from XerC binding sites by a short central region, forming the heterotetrameric XerC-XerD complex that recombines DNA substrates. The complex is essential to convert dimers of the bacterial chromosome into monomers to permit their segregation at cell division. It also contributes to the segregational stability of plasmids. In the complex XerD specifically exchanges the bottom DNA strands. This is Tyrosine recombinase XerD from Escherichia coli O157:H7.